The primary structure comprises 209 residues: Dof zinc finger protein DOF1.6 (209 aa).

Residues 1–17 show a composition bias toward polar residues; sequence MPSEPNQTRPTRVQPST. The segment at 1-29 is disordered; that stretch reads MPSEPNQTRPTRVQPSTAAYPPPNLAEPL. The segment covering 20 to 29 has biased composition (pro residues); sequence YPPPNLAEPL. The segment at 29–83 adopts a Dof-type zinc-finger fold; that stretch reads LPCPRCNSTTTKFCYYNNYNLAQPRYYCKSCRRYWTQGGTLRDVPVGGGTRRSSS. Cys31, Cys34, Cys56, and Cys59 together coordinate Zn(2+). The tract at residues 70 to 116 is disordered; that stretch reads RDVPVGGGTRRSSSKRHRSFSTTATSSSSSSSVITTTTQEPATTEAS. The span at 89–116 shows a compositional bias: low complexity; sequence FSTTATSSSSSSSVITTTTQEPATTEAS.

It is found in the nucleus. Transcription factor that binds specifically to a 5'-AA[AG]G-3' consensus core sequence. This Arabidopsis thaliana (Mouse-ear cress) protein is Dof zinc finger protein DOF1.6 (DOF1.6).